A 350-amino-acid chain; its full sequence is MALPRRPPTLTRVYLDGPFGIGKTSILNAMPDHTPDGAPILKVYEPMKYWRCQSTDLVVAANETPERRRGGALSRFQSDMIMASIQARFADPYLLFHERLSSKCRGKIEICDTPAIILMLDRHPVAAILCFPITRYLLGEYSLEMLISSIIRLPLESPGCNLTVTILPDEKEHVNRICSRDRPGETADRNMLRTLNAVYASLVDTVKYANLTCPYEKESWEMEWLGLPWFEESLLEEFISRPRPVICSRTRMPLDRTLLAIFKRKELCSENGELLTQYSWILWGLLTKLHTINVELFDISGMSRRECASAIMHTMPERLSTLASWNDLCELEDDVISYNKGMCNEVGASR.

ATP is bound at residue 17 to 24; that stretch reads GPFGIGKT. Catalysis depends on E45, which acts as the Proton acceptor. Substrate is bound at residue Q86. Residue R176 coordinates ATP. R182 is a binding site for substrate.

This sequence belongs to the herpesviridae thymidine kinase family. In terms of assembly, homodimer.

The catalysed reaction is thymidine + ATP = dTMP + ADP + H(+). Its function is as follows. Catalyzes the transfer of the gamma-phospho group of ATP to thymidine to generate dTMP in the salvage pathway of pyrimidine synthesis. The dTMP serves as a substrate for DNA polymerase during viral DNA replication. Allows the virus to be reactivated and to grow in non-proliferative cells lacking a high concentration of phosphorylated nucleic acid precursors. The chain is Thymidine kinase from Gallus gallus (Chicken).